The following is a 519-amino-acid chain: Protein nucleotidyltransferase YdiU (519 aa).

ATP is bound by residues G100, G102, R103, K123, D135, G136, R193, and R200. D270 (proton acceptor) is an active-site residue. The Mg(2+) site is built by N271 and D280. Residue D280 participates in ATP binding.

It belongs to the SELO family. It depends on Mg(2+) as a cofactor. The cofactor is Mn(2+).

The catalysed reaction is L-seryl-[protein] + ATP = 3-O-(5'-adenylyl)-L-seryl-[protein] + diphosphate. It carries out the reaction L-threonyl-[protein] + ATP = 3-O-(5'-adenylyl)-L-threonyl-[protein] + diphosphate. The enzyme catalyses L-tyrosyl-[protein] + ATP = O-(5'-adenylyl)-L-tyrosyl-[protein] + diphosphate. It catalyses the reaction L-histidyl-[protein] + UTP = N(tele)-(5'-uridylyl)-L-histidyl-[protein] + diphosphate. The catalysed reaction is L-seryl-[protein] + UTP = O-(5'-uridylyl)-L-seryl-[protein] + diphosphate. It carries out the reaction L-tyrosyl-[protein] + UTP = O-(5'-uridylyl)-L-tyrosyl-[protein] + diphosphate. In terms of biological role, nucleotidyltransferase involved in the post-translational modification of proteins. It can catalyze the addition of adenosine monophosphate (AMP) or uridine monophosphate (UMP) to a protein, resulting in modifications known as AMPylation and UMPylation. This chain is Protein nucleotidyltransferase YdiU, found in Xylella fastidiosa (strain 9a5c).